A 471-amino-acid polypeptide reads, in one-letter code: Putative multidrug resistance protein MdtD (471 aa).

The Periplasmic segment spans residues 1–11 (MTDLPDSTRWQ). A helical membrane pass occupies residues 12–32 (LWIVAFGFFMQSLDTTIVNTA). The Cytoplasmic segment spans residues 33 to 48 (LPSMAQSLGESPLHMH). Residues 49–69 (MVIVSYVLTVAVMLPASGWLA) form a helical membrane-spanning segment. The Periplasmic segment spans residues 70–76 (DKVGVRN). Residues 77–97 (IFFTAIVLFTLGSLFCALSGT) form a helical membrane-spanning segment. The Cytoplasmic segment spans residues 98–101 (LNEL). The chain crosses the membrane as a helical span at residues 102–124 (LLARALQGVGGAMMVPVGRLTVM). At 125 to 137 (KIVPREQYMAAMT) the chain is on the periplasmic side. Residues 138-158 (FVTLPGQVGPLLGPALGGLLV) form a helical membrane-spanning segment. The Cytoplasmic segment spans residues 159–164 (EYASWH). The helical transmembrane segment at 165-185 (WIFLINIPVGIIGAIATLMLM) threads the bilayer. The Periplasmic portion of the chain corresponds to 186–196 (PNYTMQTRRFD). A helical transmembrane segment spans residues 197 to 217 (LSGFLLLAVGMAVLTLALDGS). Residues 218 to 224 (KGTGLSP) lie on the Cytoplasmic side of the membrane. A helical membrane pass occupies residues 225–245 (LTIAGLVAVGVVALVLYLLHA). The Periplasmic segment spans residues 246 to 262 (RNNNRALFSLKLFRTRT). Residues 263-283 (FSLGLAGSFAGRIGSGMLPFM) form a helical membrane-spanning segment. Residues 284-285 (TP) are Cytoplasmic-facing. The chain crosses the membrane as a helical span at residues 286-306 (VFLQIGLGFSPFHAGLMMIPM). At 307–341 (VLGSMGMKRIVVQVVNCFGYRRVLVATTLGLSLVT) the chain is on the periplasmic side. The chain crosses the membrane as a helical span at residues 342 to 362 (LLFMTTALLGWYYVLPFVLFL). Over 363–395 (QGMVNSTRFSSMNTLTLKDLPDNLASSGNSLLS) the chain is Cytoplasmic. A helical membrane pass occupies residues 396-416 (MIMQLSMSIGVTIAGLLLGLF). Residues 417–430 (GSQHVSVDSGTTQT) lie on the Periplasmic side of the membrane. Residues 431–451 (VFMYTWLSMALIIALPAFIFA) form a helical membrane-spanning segment. At 452-471 (RVPNDTHQNVAISRRKRSAQ) the chain is on the cytoplasmic side.

This sequence belongs to the major facilitator superfamily. TCR/Tet family.

The protein localises to the cell inner membrane. In Escherichia coli O139:H28 (strain E24377A / ETEC), this protein is Putative multidrug resistance protein MdtD.